The chain runs to 222 residues: Type II restriction enzyme MjaI (222 aa).

It carries out the reaction Endonucleolytic cleavage of DNA to give specific double-stranded fragments with terminal 5'-phosphates.. Its function is as follows. A P subtype restriction enzyme that recognizes the double-stranded sequence 5'-CTAG-3'; the cleavage site is unknown. The chain is Type II restriction enzyme MjaI (mjaIR) from Methanocaldococcus jannaschii (strain ATCC 43067 / DSM 2661 / JAL-1 / JCM 10045 / NBRC 100440) (Methanococcus jannaschii).